The primary structure comprises 211 residues: ATP phosphoribosyltransferase (211 aa).

Belongs to the ATP phosphoribosyltransferase family. Short subfamily. Heteromultimer composed of HisG and HisZ subunits.

Its subcellular location is the cytoplasm. It carries out the reaction 1-(5-phospho-beta-D-ribosyl)-ATP + diphosphate = 5-phospho-alpha-D-ribose 1-diphosphate + ATP. Its pathway is amino-acid biosynthesis; L-histidine biosynthesis; L-histidine from 5-phospho-alpha-D-ribose 1-diphosphate: step 1/9. Catalyzes the condensation of ATP and 5-phosphoribose 1-diphosphate to form N'-(5'-phosphoribosyl)-ATP (PR-ATP). Has a crucial role in the pathway because the rate of histidine biosynthesis seems to be controlled primarily by regulation of HisG enzymatic activity. The protein is ATP phosphoribosyltransferase of Thermosynechococcus vestitus (strain NIES-2133 / IAM M-273 / BP-1).